Reading from the N-terminus, the 2641-residue chain is Inverse autotransporter adhesin YeeJ (2641 aa).

An N-terminal signal peptide occupies residues 1 to 26 (MGIKLRRLTAGICLVTQLAFPMAAAA). In terms of domain architecture, LysM spans 50–98 (VPYILGALESAQSVAERFGISVAELRKLNQFRTFARGFDNVRQGDELDV). The segment at 99–118 (PAQVSEKKLTPPPGNSSDNL) is disordered. The interval 125–400 (TSQQIGSLLA…SRYDLVDRNN (276 aa)) is inverse autotransporter. The tract at residues 513–605 (QKDSSVSLST…GVDAAKAPAV (93 aa)) is invasin 3 domain. Big-1 domains are found at residues 617–711 (HSSI…AGFI), 721–815 (IATL…VSFV), 822–913 (QVDL…VNFI), 920–1017 (ALTL…MTFV), 1024–1116 (VVVL…VNIA), 1123–1220 (QVTL…VTFV), 1227–1319 (VVVL…VNIA), 1326–1423 (QVTL…VTFV), 1430–1523 (QVVL…VHFI), 1531–1633 (IIEL…SINV), 1641–1734 (HLTL…VTYV), 1741–1837 (EISL…VNFT), 1844–1941 (QVNL…VTLI), 1948–2032 (KLTS…PTEV), 2048–2139 (FTSL…LEAI), 2142–2236 (KLTL…VKVT), and 2244–2336 (VASF…ITLV). Residues 2538–2641 (KSWWVNAGDA…FAHATCYKNL (104 aa)) are C-type lectin domain.

Belongs to the intimin/invasin family.

It is found in the cell outer membrane. Its function is as follows. A probable inverse autotransporter, it may be involved in biofilm formation and cell adhesion. May bind peptidoglycan via its LysM domain. Upon overexpression shows increased mature biofilm formation. The protein is Inverse autotransporter adhesin YeeJ of Escherichia coli O17:K52:H18 (strain UMN026 / ExPEC).